Reading from the N-terminus, the 166-residue chain is Ribosome maturation factor RimM (166 aa).

Residues 91–163 (EDEFYEFQLI…KMQITPPEGW (73 aa)) enclose the PRC barrel domain.

Belongs to the RimM family. In terms of assembly, binds ribosomal protein uS19.

The protein resides in the cytoplasm. Its function is as follows. An accessory protein needed during the final step in the assembly of 30S ribosomal subunit, possibly for assembly of the head region. Essential for efficient processing of 16S rRNA. May be needed both before and after RbfA during the maturation of 16S rRNA. It has affinity for free ribosomal 30S subunits but not for 70S ribosomes. The protein is Ribosome maturation factor RimM of Sulfurihydrogenibium sp. (strain YO3AOP1).